The chain runs to 282 residues: MLKFLVKAPAKVNLFLHITGKRSDQHHYLESLFVFVNVYDILEVDVGGSKRGVYFSNLRISKYNNTVYKAIELLLKHSAVCPNVSVSIIKNILVSAGLAGGSADAAAIMRLLGNMWNIDYTLLQDLALKIGSDVPACLESKTLFAKGVGEDILLLPDLLLPKYIILVAPRGKTLSTAKVFNNYQSATYSPSICDKLPVKQDDWMELICNAKNDLLEVALKFVPEIEEILFVLKQLKNSVIARMTGSGATCFALFNELSHAEDAARKLQMTRPDWIIFNAKIL.

The active site involves K11. 93–103 (LVSAGLAGGSA) is an ATP binding site. Residue D133 is part of the active site.

This sequence belongs to the GHMP kinase family. IspE subfamily.

The enzyme catalyses 4-CDP-2-C-methyl-D-erythritol + ATP = 4-CDP-2-C-methyl-D-erythritol 2-phosphate + ADP + H(+). Its pathway is isoprenoid biosynthesis; isopentenyl diphosphate biosynthesis via DXP pathway; isopentenyl diphosphate from 1-deoxy-D-xylulose 5-phosphate: step 3/6. In terms of biological role, catalyzes the phosphorylation of the position 2 hydroxy group of 4-diphosphocytidyl-2C-methyl-D-erythritol. The chain is 4-diphosphocytidyl-2-C-methyl-D-erythritol kinase from Ehrlichia chaffeensis (strain ATCC CRL-10679 / Arkansas).